The primary structure comprises 193 residues: Phosphoheptose isomerase (193 aa).

In terms of domain architecture, SIS spans 37-193 (LADSFKAGGK…QLIEKEMVKA (157 aa)). 52-54 (NGG) is a substrate binding site. Residues His61 and Glu65 each contribute to the Zn(2+) site. Residues Glu65, 93-94 (ND), 119-121 (STS), Ser124, and Gln172 contribute to the substrate site. Gln172 and His180 together coordinate Zn(2+).

This sequence belongs to the SIS family. GmhA subfamily. In terms of assembly, homotetramer. It depends on Zn(2+) as a cofactor.

It is found in the cytoplasm. It catalyses the reaction 2 D-sedoheptulose 7-phosphate = D-glycero-alpha-D-manno-heptose 7-phosphate + D-glycero-beta-D-manno-heptose 7-phosphate. Its pathway is carbohydrate biosynthesis; D-glycero-D-manno-heptose 7-phosphate biosynthesis; D-glycero-alpha-D-manno-heptose 7-phosphate and D-glycero-beta-D-manno-heptose 7-phosphate from sedoheptulose 7-phosphate: step 1/1. In terms of biological role, catalyzes the isomerization of sedoheptulose 7-phosphate in D-glycero-D-manno-heptose 7-phosphate. This is Phosphoheptose isomerase from Yersinia enterocolitica serotype O:8 / biotype 1B (strain NCTC 13174 / 8081).